Consider the following 31-residue polypeptide: M-poneritoxin-Nc3b (31 aa).

It belongs to the ponericin-G family. Expressed by the venom gland.

The protein resides in the secreted. It is found in the target cell membrane. Its function is as follows. Membrane-perturbating peptide with a few moderate activities. It is insecticidal, since it induces reversible paralysis in insects (L.cuprina) after 1 hour, but fails to kill them. It is also antiparasitic, since it moderately inhibits the larval development of the major pathogenic nematode of ruminants (H.contortus, IC(50)=23.2 uM) and reduces the motility of adult males of the other nematode B.malayi. It does not show antibacterial activity (MIC&gt;40 uM). It is not cytotoxic to HEK293 cells and does not induce hemolysis in human erythrocytes. It does not cause an increase in intracellular calcium concentration on neuronal and epithelial cell lines. This is M-poneritoxin-Nc3b from Neoponera commutata (Large hunting ant).